Here is a 302-residue protein sequence, read N- to C-terminus: MLKSSKKEDDSKKNHDNKSIFHLRKLFSPIKSLFSNKVPDDFFSVIKRLKTNSQKMTLDERNILANLLKLKGKTIEDIMVPRSDIAAIKLTTNIEELNESIKVKIPHTRTLIYDGTLDNIVGFIHIKDLFKALVTKQNFRLKKLIRKHIIAAPSMKLLDLLAKMRREKTHIAIVIDEYGGTDGLVTIEDVMEALVGRIDDEHDQKSEYDNYKVINNSTIISNARVEVEVLEEIIGEKLKDDDDDEFDTIGGLVLTKMGNVPAVGTKINVSENIEIEVTDANPRSLKQVKITLKNSLKRAKSS.

CBS domains are found at residues 79–141 (MVPR…NFRL) and 144–201 (LIRK…IDDE).

Belongs to the UPF0053 family. Hemolysin C subfamily.

The polypeptide is Possible hemolysin C (tlyC) (Rickettsia bellii (strain OSU 85-389)).